The chain runs to 384 residues: 23S rRNA (uracil(747)-C(5))-methyltransferase RlmC (384 aa).

[4Fe-4S] cluster contacts are provided by C3, C11, C14, and C87. S-adenosyl-L-methionine contacts are provided by Q212, F241, E262, and N309. C336 functions as the Nucleophile in the catalytic mechanism.

The protein belongs to the class I-like SAM-binding methyltransferase superfamily. RNA M5U methyltransferase family. RlmC subfamily.

The enzyme catalyses uridine(747) in 23S rRNA + S-adenosyl-L-methionine = 5-methyluridine(747) in 23S rRNA + S-adenosyl-L-homocysteine + H(+). In terms of biological role, catalyzes the formation of 5-methyl-uridine at position 747 (m5U747) in 23S rRNA. The chain is 23S rRNA (uracil(747)-C(5))-methyltransferase RlmC from Shewanella amazonensis (strain ATCC BAA-1098 / SB2B).